A 217-amino-acid chain; its full sequence is tRNA (guanine-N(7)-)-methyltransferase (217 aa).

Glu44, Asp69, Asp96, and Asp118 together coordinate S-adenosyl-L-methionine. Asp118 is an active-site residue. Position 122 (Lys122) interacts with substrate. Residues 124-129 (RHEKRR) are interaction with RNA. Substrate contacts are provided by residues Asp154 and 193 to 196 (TEYE).

The protein belongs to the class I-like SAM-binding methyltransferase superfamily. TrmB family.

The enzyme catalyses guanosine(46) in tRNA + S-adenosyl-L-methionine = N(7)-methylguanosine(46) in tRNA + S-adenosyl-L-homocysteine. It participates in tRNA modification; N(7)-methylguanine-tRNA biosynthesis. Catalyzes the formation of N(7)-methylguanine at position 46 (m7G46) in tRNA. This is tRNA (guanine-N(7)-)-methyltransferase from Lactococcus lactis subsp. cremoris (strain SK11).